Reading from the N-terminus, the 1498-residue chain is Transposon Ty3-I Gag-Pol polyprotein (1498 aa).

A CCHC-type zinc finger spans residues R265 to A282. The For protease activity; shared with dimeric partner role is filled by D336. The interval T470–P490 is disordered. Residues L646 to I823 form the Reverse transcriptase domain. Residues D712, D774, and D775 each contribute to the Mg(2+) site. The RNase H Ty3/gyspy-type domain maps to D919–Y1037. An integrase-type zinc finger-like region spans residues H1132–C1171. Residues L1185 to L1350 enclose the Integrase catalytic domain. Residues D1201 and D1262 each coordinate Mg(2+).

The protease is a homodimer, whose active site consists of two apposed aspartic acid residues. Initially, virus-like particles (VLPs) are composed of the structural unprocessed proteins Gag and Gag-Pol, and also contain the host initiator methionine tRNA (tRNA(i)-Met) which serves as a primer for minus-strand DNA synthesis, and a dimer of genomic Ty RNA. Processing of the polyproteins occurs within the particle and proceeds by an ordered pathway, called maturation. First, the protease (PR) is released by autocatalytic cleavage of the Gag-Pol polyprotein, and this cleavage is a prerequisite for subsequent processing at the remaining sites to release the mature structural and catalytic proteins. Maturation takes place prior to the RT reaction and is required to produce transposition-competent VLPs.

It is found in the cytoplasm. The protein localises to the nucleus. It catalyses the reaction DNA(n) + a 2'-deoxyribonucleoside 5'-triphosphate = DNA(n+1) + diphosphate. It carries out the reaction Endonucleolytic cleavage to 5'-phosphomonoester.. In terms of biological role, capsid protein (CA) is the structural component of the virus-like particle (VLP), forming the shell that encapsulates the genomic RNA-nucleocapsid complex. Functionally, nucleocapsid protein p11 (NC) forms the nucleocore that coats the retro-elements dimeric RNA. Binds these RNAs through its zinc fingers. Promotes primer tRNA(i)-Met annealing to the multipartite primer-binding site (PBS), dimerization of Ty3 RNA and initiation of reverse transcription. The aspartyl protease (PR) mediates the proteolytic cleavages of the Gag and Gag-Pol polyproteins after assembly of the VLP. Its function is as follows. Reverse transcriptase/ribonuclease H (RT) is a multifunctional enzyme that catalyzes the conversion of the retro-elements RNA genome into dsDNA within the VLP. The enzyme displays a DNA polymerase activity that can copy either DNA or RNA templates, and a ribonuclease H (RNase H) activity that cleaves the RNA strand of RNA-DNA heteroduplexes during plus-strand synthesis and hydrolyzes RNA primers. The conversion leads to a linear dsDNA copy of the retrotransposon that includes long terminal repeats (LTRs) at both ends. In terms of biological role, integrase (IN) targets the VLP to the nucleus, where a subparticle preintegration complex (PIC) containing at least integrase and the newly synthesized dsDNA copy of the retrotransposon must transit the nuclear membrane. Once in the nucleus, integrase performs the integration of the dsDNA into the host genome. The polypeptide is Transposon Ty3-I Gag-Pol polyprotein (TY3B-I) (Saccharomyces cerevisiae (strain ATCC 204508 / S288c) (Baker's yeast)).